The chain runs to 53 residues: Small, acid-soluble spore protein K (53 aa).

Residues 1–53 (MGRQAEFWSESKNNSKIDGQPKAKARFASKRPNGTINTHPQERMRAANQQEEE) form a disordered region.

The protein belongs to the SspK family.

The protein localises to the spore core. In Bacillus cytotoxicus (strain DSM 22905 / CIP 110041 / 391-98 / NVH 391-98), this protein is Small, acid-soluble spore protein K.